Here is a 209-residue protein sequence, read N- to C-terminus: uncharacterized protein (209 aa).

Disordered regions lie at residues 1-80 (MFVR…PPVE) and 164-197 (LPAG…PGME). The span at 178-189 (SRGSSRSSCSQR) shows a compositional bias: low complexity.

This is an uncharacterized protein from Homo sapiens (Human).